Here is a 386-residue protein sequence, read N- to C-terminus: bHLH transcription factor RHL1 (386 aa).

The disordered stretch occupies residues 119-186; the sequence is FTGSLNGTQP…RRGQATDPHS (68 aa). The segment covering 127–137 has biased composition (low complexity); sequence QPQQHFQHPPQ. The span at 138–151 shows a compositional bias: polar residues; the sequence is GNSNQIQGQNFGAT. A basic motif; degenerate region spans residues 180–193; the sequence is QATDPHSIAERLRR. The bHLH domain occupies 180 to 229; the sequence is QATDPHSIAERLRRERIAERMKALQELVPNANKTDKASMLDEIIDYVKFL. The segment at 194–229 is helix-loop-helix motif; it reads ERIAERMKALQELVPNANKTDKASMLDEIIDYVKFL.

Expressed in root epidermal cells.

The protein resides in the nucleus. In terms of biological role, transcription factor that regulates the development of root hairs. The polypeptide is bHLH transcription factor RHL1 (Lotus japonicus (Lotus corniculatus var. japonicus)).